Consider the following 90-residue polypeptide: Probable Fe(2+)-trafficking protein (90 aa).

Belongs to the Fe(2+)-trafficking protein family.

Functionally, could be a mediator in iron transactions between iron acquisition and iron-requiring processes, such as synthesis and/or repair of Fe-S clusters in biosynthetic enzymes. The protein is Probable Fe(2+)-trafficking protein of Paracidovorax citrulli (strain AAC00-1) (Acidovorax citrulli).